The primary structure comprises 130 residues: Ribosome-binding factor A (130 aa).

Belongs to the RbfA family. As to quaternary structure, monomer. Binds 30S ribosomal subunits, but not 50S ribosomal subunits or 70S ribosomes.

It localises to the cytoplasm. Its function is as follows. One of several proteins that assist in the late maturation steps of the functional core of the 30S ribosomal subunit. Associates with free 30S ribosomal subunits (but not with 30S subunits that are part of 70S ribosomes or polysomes). Required for efficient processing of 16S rRNA. May interact with the 5'-terminal helix region of 16S rRNA. The chain is Ribosome-binding factor A from Methylibium petroleiphilum (strain ATCC BAA-1232 / LMG 22953 / PM1).